The following is a 361-amino-acid chain: Mitochondrial import receptor subunit TOM40 homolog (361 aa).

A disordered region spans residues 1–73; it reads MGNVLAASSP…GAAAASEDGS (73 aa). Over residues 11–36 the composition is skewed to pro residues; sequence PAGPPPPPTPSLVGLPPPPPSPPGFT. A compositionally biased stretch (gly residues) spans 40 to 50; sequence LGGGLGTGSST. The span at 51–69 shows a compositional bias: low complexity; the sequence is GRGSERTPGAAASGAAAAS.

This sequence belongs to the Tom40 family. As to quaternary structure, forms part of the preprotein translocase complex of the outer mitochondrial membrane (TOM complex) which consists of at least 7 different proteins (TOMM5, TOMM6, TOMM7, TOMM20, TOMM22, TOMM40 and TOMM70). Interacts with mitochondrial targeting sequences. Interacts with TIMM29; linking the TIM22 complex to the TOM complex. Forms a complex with BCAP31 (via C-terminus) which mediates the translocation of components of the mitochondrial membrane respiratory chain NADH dehydrogenase (Complex I) from the cytosol to the mitochondria. Interacts (via N-terminus) with CYP1A1 (via mitochondrial targeting signal); this interaction is required for CYP1A1 translocation across the mitochondrial outer membrane.

It is found in the mitochondrion outer membrane. In terms of biological role, channel-forming protein essential for import of protein precursors into mitochondria. Plays a role in the assembly of the mitochondrial membrane respiratory chain NADH dehydrogenase (Complex I) by forming a complex with BCAP31 and mediating the translocation of Complex I components from the cytosol to the mitochondria. This is Mitochondrial import receptor subunit TOM40 homolog (Tomm40) from Mus musculus (Mouse).